Here is a 454-residue protein sequence, read N- to C-terminus: uncharacterized protein (454 aa).

[4Fe-4S] cluster-binding residues include Cys73, Cys79, Cys82, and Cys154. Residues Gln279, Phe307, Asp328, and Asp381 each contribute to the S-adenosyl-L-methionine site. The active-site Nucleophile is the Cys408.

This sequence belongs to the class I-like SAM-binding methyltransferase superfamily. RNA M5U methyltransferase family.

This is an uncharacterized protein from Leptospira interrogans serogroup Icterohaemorrhagiae serovar Lai (strain 56601).